The sequence spans 573 residues: Glutathione/L-cysteine transport system ATP-binding/permease protein CydC (573 aa).

Residues 1-15 (MRALLPYLALYKRHK) are Cytoplasmic-facing. A run of 2 helical transmembrane segments spans residues 16-36 (WMLS…IGLL) and 37-57 (TLSG…LYSF). One can recognise an ABC transmembrane type-1 domain in the interval 20–306 (LGIVLAIVTL…VTGAFQHLGQ (287 aa)). The Cytoplasmic segment spans residues 58–136 (NYMLPAAGVR…VDTLDHLYLR (79 aa)). The chain crosses the membrane as a helical span at residues 137–157 (VISPLVGAFVVIMVVTIGLSF). At 158-161 (LDFT) the chain is on the periplasmic side. The helical transmembrane segment at 162 to 182 (LAFTLGGIMLLTLFLMPPLFY) threads the bilayer. Residues 183-249 (RAGKSTGQNL…QSELTALSQA (67 aa)) lie on the Cytoplasmic side of the membrane. The chain crosses the membrane as a helical span at residues 250–270 (IMLLIGALAVILMLWMASGGV). At 271 to 276 (GGNAQP) the chain is on the periplasmic side. Residues 277-297 (GALIALFVFCALAAFEALAPV) form a helical membrane-spanning segment. Residues 298–573 (TGAFQHLGQV…GRYYQFKQGL (276 aa)) are Cytoplasmic-facing. An ABC transporter domain is found at 339–572 (LTLRDVQFTY…QGRYYQFKQG (234 aa)). 373-380 (GRTGCGKS) is an ATP binding site.

This sequence belongs to the ABC transporter superfamily. Cysteine exporter (TC 3.A.1.129.1) family. In terms of assembly, forms a heterodimer with CydD.

Its subcellular location is the cell inner membrane. It carries out the reaction L-cysteine(in) + ATP + H2O = L-cysteine(out) + ADP + phosphate + H(+). It catalyses the reaction glutathione(in) + ATP + H2O = glutathione(out) + ADP + phosphate + H(+). ATPase activity is stimulated by various thiol compounds. The presence of heme leads to a further enhancement of thiol-stimulated ATPase activity, although a large excess of heme inhibits activity. Glutathione transport is inhibited by sodium orthovanadate, an inhibitor of ABC-type transport systems, but not by the proton ionophore carbonyl cyanide m-chlorophenylhydrazone (CCCP). Its function is as follows. Part of the ABC transporter complex CydDC that exports the reduced low-molecular-weight thiols cysteine and glutathione to the periplasm. Export of these thiol-containing redox-active molecules may be crucial for redox homeostasis in the periplasm, permitting correct assembly of various respiratory complexes and formation of correct disulfide bonds in periplasmic and secreted proteins. CydC contains transmembrane domains (TMD), which form a pore in the inner membrane, and an ATP-binding domain (NBD), which is responsible for energy generation. Required for the assembly of functional cytochrome bd-type quinol oxidases and periplasmic c-type cytochromes. Overexpression of CydDC under anaerobic conditions also results in the formation of a heme biosynthesis-derived pigment, P-574. CydDC binds heme b, but heme is probably not transported by the complex and instead has a role in regulating ATPase activity. Conversely, a more recent study suggests an alternative function of CydDC: authors suggest that CydDC does not mediate the export of L-cysteine but rather reduces cytoplasmic L-cystine to L-cysteine. The principle function of CydDC would be to maintain the reduced state of cytoplasmic L-cysteine, thereby providing an important connection between sulfur metabolism, oxidative stress and resistance to antibiotics. This chain is Glutathione/L-cysteine transport system ATP-binding/permease protein CydC, found in Escherichia coli (strain K12).